The chain runs to 1397 residues: DNA-directed RNA polymerase subunit beta (1397 aa).

Belongs to the RNA polymerase beta chain family. In terms of assembly, the RNAP catalytic core consists of 2 alpha, 1 beta, 1 beta' and 1 omega subunit. When a sigma factor is associated with the core the holoenzyme is formed, which can initiate transcription.

The enzyme catalyses RNA(n) + a ribonucleoside 5'-triphosphate = RNA(n+1) + diphosphate. DNA-dependent RNA polymerase catalyzes the transcription of DNA into RNA using the four ribonucleoside triphosphates as substrates. This chain is DNA-directed RNA polymerase subunit beta, found in Rhodospirillum centenum (strain ATCC 51521 / SW).